Consider the following 237-residue polypeptide: UPF0502 protein HEAR1280 (237 aa).

The span at 1–13 (MNTEVMHSTSTES) shows a compositional bias: polar residues. The disordered stretch occupies residues 1–21 (MNTEVMHSTSTESDAQEKPQA).

It belongs to the UPF0502 family.

The polypeptide is UPF0502 protein HEAR1280 (Herminiimonas arsenicoxydans).